The following is a 344-amino-acid chain: Arginine N-succinyltransferase (344 aa).

Position 125 (Leu125) interacts with succinyl-CoA. His229 serves as the catalytic Proton donor.

Belongs to the arginine N-succinyltransferase family.

The catalysed reaction is succinyl-CoA + L-arginine = N(2)-succinyl-L-arginine + CoA + H(+). The protein operates within amino-acid degradation; L-arginine degradation via AST pathway; L-glutamate and succinate from L-arginine: step 1/5. In terms of biological role, catalyzes the transfer of succinyl-CoA to arginine to produce N(2)-succinylarginine. The protein is Arginine N-succinyltransferase of Salmonella agona (strain SL483).